The following is a 257-amino-acid chain: Melatonin receptor type 1A (257 aa).

Topologically, residues 5–22 (LASIVNDGWSLSSLHCQL) are extracellular. A disulfide bond links Cys-20 and Cys-97. A helical membrane pass occupies residues 23–43 (SGFLMGLSVIGSVFNITGIAI). Over 44–64 (NRYCCICHSLRYNKLYSSTNS) the chain is Cytoplasmic. A helical transmembrane segment spans residues 65–85 (LCYVFLIWMLTLVAIVPNLCV). At 86-107 (GTLQYDPRIYSCTFTQSVSSAY) the chain is on the extracellular side. Residues 108-128 (TIAVVVFHFIVPMLVVIFCYL) traverse the membrane as a helical segment. The Cytoplasmic segment spans residues 129–160 (RIWALVLQVRWRVKPDNKPKLKPQDFRNFVTM). Residues 161-181 (FVVFVLFAICWAPLNFIGLVV) form a helical membrane-spanning segment. Residues 182–194 (ASEPASMAPRIPE) are Extracellular-facing. Residues 195–215 (WLFVASYYMGYFNSCLNAIIY) traverse the membrane as a helical segment. Topologically, residues 216–257 (GLLNQNFRQEYRKIIVSLCTTKMFFVDSSNHVAHRIKRKPSP) are cytoplasmic.

It belongs to the G-protein coupled receptor 1 family.

The protein localises to the cell membrane. In terms of biological role, high affinity receptor for melatonin. Likely to mediate the reproductive and circadian actions of melatonin. The activity of this receptor is mediated by pertussis toxin sensitive G proteins that inhibit adenylate cyclase activity. Possibly involved in sleep induction, by melatonin activation of the potassium channel KCNMA1/BK and the dissociation of G-beta and G-gamma subunits, thereby decreasing synaptic transmission. This Bos taurus (Bovine) protein is Melatonin receptor type 1A (MTNR1A).